A 270-amino-acid chain; its full sequence is Cell division protein DivIB (270 aa).

At 1–28 (MAENKRVISIENRIPELKKYRKKKLVRH) the chain is on the cytoplasmic side. Residues 29–49 (LAILIGIFVILIAITLYFLSP) traverse the membrane as a helical segment. Topologically, residues 50-270 (LSKLDKIAVS…AAKEKKETNE (221 aa)) are extracellular. Residues 51 to 119 (SKLDKIAVSG…NDVQINITEF (69 aa)) form the POTRA domain.

This sequence belongs to the FtsQ/DivIB family. DivIB subfamily.

It localises to the cell membrane. Cell division protein that may be involved in stabilizing or promoting the assembly of the division complex. This chain is Cell division protein DivIB, found in Listeria monocytogenes serovar 1/2a (strain ATCC BAA-679 / EGD-e).